Here is a 743-residue protein sequence, read N- to C-terminus: Coiled-coil domain-containing protein 30 (743 aa).

Composition is skewed to basic and acidic residues over residues 1 to 22 (MSQEKNEMFESEWSKEREREKQ) and 133 to 193 (SPKE…MKPE). Disordered regions lie at residues 1 to 25 (MSQEKNEMFESEWSKEREREKQLAS), 114 to 193 (ENIC…MKPE), 208 to 233 (SLLQSQSSGDSSDDSGAQYPSSGDKL), and 695 to 715 (SKEAMASSKSPEKSPENLVCS). Coiled coils occupy residues 21 to 98 (KQLA…QLNH) and 165 to 580 (REGQ…LIHS). The span at 208–223 (SLLQSQSSGDSSDDSG) shows a compositional bias: low complexity.

The protein belongs to the prefoldin subunit beta family.

The protein is Coiled-coil domain-containing protein 30 (CCDC30) of Macaca fascicularis (Crab-eating macaque).